Consider the following 561-residue polypeptide: Dihydroxy-acid dehydratase (561 aa).

Position 50 (cysteine 50) interacts with [2Fe-2S] cluster. Aspartate 82 serves as a coordination point for Mg(2+). Cysteine 123 contacts [2Fe-2S] cluster. The Mg(2+) site is built by aspartate 124 and lysine 125. Lysine 125 carries the N6-carboxylysine modification. [2Fe-2S] cluster is bound at residue cysteine 195. Glutamate 447 lines the Mg(2+) pocket. Serine 473 (proton acceptor) is an active-site residue.

This sequence belongs to the IlvD/Edd family. Homodimer. [2Fe-2S] cluster serves as cofactor. Mg(2+) is required as a cofactor.

The catalysed reaction is (2R)-2,3-dihydroxy-3-methylbutanoate = 3-methyl-2-oxobutanoate + H2O. It catalyses the reaction (2R,3R)-2,3-dihydroxy-3-methylpentanoate = (S)-3-methyl-2-oxopentanoate + H2O. Its pathway is amino-acid biosynthesis; L-isoleucine biosynthesis; L-isoleucine from 2-oxobutanoate: step 3/4. The protein operates within amino-acid biosynthesis; L-valine biosynthesis; L-valine from pyruvate: step 3/4. Functions in the biosynthesis of branched-chain amino acids. Catalyzes the dehydration of (2R,3R)-2,3-dihydroxy-3-methylpentanoate (2,3-dihydroxy-3-methylvalerate) into 2-oxo-3-methylpentanoate (2-oxo-3-methylvalerate) and of (2R)-2,3-dihydroxy-3-methylbutanoate (2,3-dihydroxyisovalerate) into 2-oxo-3-methylbutanoate (2-oxoisovalerate), the penultimate precursor to L-isoleucine and L-valine, respectively. The chain is Dihydroxy-acid dehydratase from Chloroflexus aurantiacus (strain ATCC 29366 / DSM 635 / J-10-fl).